Here is a 176-residue protein sequence, read N- to C-terminus: NAD(P)H-quinone oxidoreductase subunit 6, chloroplastic (176 aa).

A run of 5 helical transmembrane segments spans residues 10–30 (FLLV…VLLP), 32–52 (PIFS…LYIL), 61–81 (AQLL…VMFM), 92–112 (LWTV…FSLL), and 152–172 (FFLP…GAIS).

This sequence belongs to the complex I subunit 6 family. In terms of assembly, NDH is composed of at least 16 different subunits, 5 of which are encoded in the nucleus.

It localises to the plastid. Its subcellular location is the chloroplast thylakoid membrane. The enzyme catalyses a plastoquinone + NADH + (n+1) H(+)(in) = a plastoquinol + NAD(+) + n H(+)(out). The catalysed reaction is a plastoquinone + NADPH + (n+1) H(+)(in) = a plastoquinol + NADP(+) + n H(+)(out). In terms of biological role, NDH shuttles electrons from NAD(P)H:plastoquinone, via FMN and iron-sulfur (Fe-S) centers, to quinones in the photosynthetic chain and possibly in a chloroplast respiratory chain. The immediate electron acceptor for the enzyme in this species is believed to be plastoquinone. Couples the redox reaction to proton translocation, and thus conserves the redox energy in a proton gradient. This is NAD(P)H-quinone oxidoreductase subunit 6, chloroplastic (ndhG) from Lepidium virginicum (Virginia pepperweed).